The primary structure comprises 144 residues: Transcriptional regulator SlyA (144 aa).

An HTH marR-type domain is found at 2–135 (ESPLGSDLAR…LITLIAKLEH (134 aa)). A DNA-binding region (H-T-H motif) is located at residues 49–72 (QIQLAKAIGIEQPSLVRTLDQLEE).

It belongs to the SlyA family. As to quaternary structure, homodimer.

Its function is as follows. Transcription regulator that can specifically activate or repress expression of target genes. The sequence is that of Transcriptional regulator SlyA from Shigella boydii serotype 18 (strain CDC 3083-94 / BS512).